Here is a 283-residue protein sequence, read N- to C-terminus: 4-diphosphocytidyl-2-C-methyl-D-erythritol kinase (283 aa).

K10 is a catalytic residue. P99–S109 provides a ligand contact to ATP. Residue D141 is part of the active site.

It belongs to the GHMP kinase family. IspE subfamily. As to quaternary structure, homodimer.

It carries out the reaction 4-CDP-2-C-methyl-D-erythritol + ATP = 4-CDP-2-C-methyl-D-erythritol 2-phosphate + ADP + H(+). It functions in the pathway isoprenoid biosynthesis; isopentenyl diphosphate biosynthesis via DXP pathway; isopentenyl diphosphate from 1-deoxy-D-xylulose 5-phosphate: step 3/6. In terms of biological role, catalyzes the phosphorylation of the position 2 hydroxy group of 4-diphosphocytidyl-2C-methyl-D-erythritol. The polypeptide is 4-diphosphocytidyl-2-C-methyl-D-erythritol kinase (Salmonella typhi).